We begin with the raw amino-acid sequence, 793 residues long: MGVWLSKDDYIRDLKRIILCFLIVYMAILVGTEQDFYSLLGVSKTASSREIRQAFKKLALKLHPDKNPNNPNAHGNFLKINRAYEVLKDEDLRKKYDKYGEKGLEDNQGGQYESWNYYRYDFGIYDDDPEIITLERREFDAAVNSGELWFVNFYSPGCSHCHDLAPTWRDFAKEVDGLLRIGAVNCGDDRMLCRMKGVNSYPSLFIFRSGMAPVKYHGDRSKESLVSFAMQHVRSTVTELWTGNFVNSIQTAFAAGIGWLITFCSKGGDCLTSQTRLRLSGMLDGLVNVGWMDCATQDNLCKSLDITTSTTAYFPPGATLNNKEKNSILFLNSLDAKEIYLEVIHNLPDFELLSAHTLEDRLAHHRWLLFFHFGKNENSNDPELKKLKTLLKNDHIQVGRFDCSSAPDICSNLYVFQPSLAVFKGQGTKEYEIHHGKKILYDILAFAKESVNSHVTTLGPQNFPANDKEPWLVDFFAPWCPPCRALLPELRRASNLLYGQLKFGTLDCTVHEGLCNMYNIQAYPTTVVFNQSNIHEYEGHHSAEQILEFIEDLMNPSVVSLTPTTFNELVTQRKHNEVWMVDFYSPWCHPCQVLMPEWKRMARTLTGLINVGSIDCQQYHSFCAQENVQRYPEIRFFPPKSNKAYQYHSYNGWNRDAYSLRIWGLGFLPQVSTGLTPQTFSEKVLQGKNHWVIDFYAPWCGPCQNFAPEFELLARMIKGKVKAGKVDCQAYAQTCQKAGIRAYPTVKFYFYESAKRTFQEEQINIRDAKAIAALINEKLETLQNQGKRNKDEL.

The N-terminal stretch at 1–32 (MGVWLSKDDYIRDLKRIILCFLIVYMAILVGT) is a signal peptide. The region spanning 35–100 (DFYSLLGVSK…DLRKKYDKYG (66 aa)) is the J domain. The 103-residue stretch at 130-232 (EIITLERREF…ESLVSFAMQH (103 aa)) folds into the Thioredoxin 1 domain. A disulfide bridge connects residues C158 and C161. Trxb stretches follow at residues 235–350 (STVT…LPDF) and 348–463 (PDFE…PQNF). 3 consecutive Thioredoxin domains span residues 454–553 (HVTT…IEDL), 557–662 (SVVS…SLRI), and 671–778 (VSTG…INEK). The cysteines at positions 480 and 483 are disulfide-linked. N-linked (GlcNAc...) asparagine glycosylation is present at N530. Cystine bridges form between C588/C591 and C700/C703. The short motif at 790-793 (KDEL) is the Prevents secretion from ER element.

In terms of assembly, interacts with HSPA5 (via its J domain). Interacts with EDEM1.

It localises to the endoplasmic reticulum lumen. Endoplasmic reticulum disulfide reductase involved both in the correct folding of proteins and degradation of misfolded proteins. Required for efficient folding of proteins in the endoplasmic reticulum by catalyzing the removal of non-native disulfide bonds formed during the folding of proteins, such as LDLR. Also involved in endoplasmic reticulum-associated degradation (ERAD) by reducing incorrect disulfide bonds in misfolded glycoproteins recognized by EDEM1. Interaction with HSPA5 is required its activity, not for the disulfide reductase activity, but to facilitate the release of DNAJC10 from its substrate. Promotes apoptotic signaling pathway in response to endoplasmic reticulum stress. This chain is DnaJ homolog subfamily C member 10 (DNAJC10), found in Pongo abelii (Sumatran orangutan).